A 305-amino-acid polypeptide reads, in one-letter code: Glutaminase (305 aa).

7 residues coordinate substrate: Ser-61, Asn-113, Glu-158, Asn-165, Tyr-189, Tyr-241, and Val-259.

The protein belongs to the glutaminase family. In terms of assembly, homotetramer.

The enzyme catalyses L-glutamine + H2O = L-glutamate + NH4(+). This chain is Glutaminase, found in Clostridium botulinum (strain Kyoto / Type A2).